The primary structure comprises 263 residues: MGESALEPGPVPGAPAGGPVHAVTVVTLLEKLATMLEALRERQGGLAERQGGLAGSVRRIQSGLGALSRSHDTTSNTLAQLLAKAERVGSHADAAQERAVHRAAQVQRLEANHGLLVARGKLHVLLFKEETEIPARAFQKAPELLGPEDQLVLGPEQPEDEVGESSDEEPVESRAQRLRRTGLQKVQSLKRAFSSRKGSEAAQPTPVKPPRLGPVRNSEGPAEGQPAAQPAMEPVLPSALEPEPPQPTKEDPERPVLQIESAA.

The interaction with CAVIN1 stretch occupies residues 1-84; the sequence is MGESALEPGP…SNTLAQLLAK (84 aa). Residues 20–78 form a leucine-zipper region; sequence VHAVTVVTLLEKLATMLEALRERQGGLAERQGGLAGSVRRIQSGLGALSRSHDTTSNTL. Residues Ser62 and Ser70 each carry the phosphoserine modification. A Glycyl lysine isopeptide (Lys-Gly) (interchain with G-Cter in SUMO2) cross-link involves residue Lys128. Residues 135-203 form an interaction with CAV1 region; it reads ARAFQKAPEL…SSRKGSEAAQ (69 aa). Positions 141-263 are disordered; it reads APELLGPEDQ…RPVLQIESAA (123 aa). Acidic residues predominate over residues 157 to 170; sequence QPEDEVGESSDEEP. 4 positions are modified to phosphoserine: Ser165, Ser166, Ser173, and Ser199. Residues 219–234 show a composition bias toward low complexity; sequence EGPAEGQPAAQPAMEP.

This sequence belongs to the CAVIN family. Component of the CAVIN complex composed of CAVIN1, CAVIN2, CAVIN3 and CAVIN4. Interacts with PRKCD and with phosphatidylserine. Phosphatidylserine may form a bridge between PKC and PKC-binding partners and stabilize the binding. Interacts with PER2. Interacts with CAVIN1 and EPS15L1. Interacts (via leucine-zipper domain) with CAV1 in a cholesterol-sensitive manner. Post-translationally, in vitro, phosphorylated by PRKCD.

The protein resides in the cytoplasm. The protein localises to the membrane. It is found in the caveola. Its subcellular location is the cytosol. Its function is as follows. Regulates the traffic and/or budding of caveolae. Plays a role in caveola formation in a tissue-specific manner. Required for the formation of caveolae in smooth muscle but not in the lung and heart endothelial cells. Regulates the equilibrium between cell surface-associated and cell surface-dissociated caveolae by promoting the rapid release of caveolae from the cell surface. Plays a role in the regulation of the circadian clock. Modulates the period length and phase of circadian gene expression and also regulates expression and interaction of the core clock components PER1/2 and CRY1/2. Seems to have an immune potentiation function, especially in the glioma. The protein is Caveolae-associated protein 3 of Rattus norvegicus (Rat).